A 1257-amino-acid chain; its full sequence is RAF-like serine/threonine-protein kinase 24 (1257 aa).

A disordered region spans residues 1-21; it reads MDQAKGYEHVRYTAPDPRDEG. Residues 191 to 277 form the PB1 domain; sequence PRDQKLRYVG…EKPRMFLFSS (87 aa). Composition is skewed to basic and acidic residues over residues 457–480 and 493–502; these read VQDP…KVND and KEPKMRRESS. Disordered stretches follow at residues 457–629 and 761–789; these read VQDP…RTSQ and SQSE…VPQG. The residue at position 474 (Ser-474) is a Phosphoserine. Residues 533–548 are compositionally biased toward low complexity; that stretch reads TQTSSSTPDPSSSTLS. Residues 550 to 576 show a composition bias toward basic and acidic residues; it reads KSLRKSEDHVENNLSAKEPKMRKEHST. Ser-555 carries the post-translational modification Phosphoserine. The segment covering 583-593 has biased composition (low complexity); that stretch reads SVSSVSSDSMV. Residues 769 to 782 show a composition bias toward polar residues; the sequence is ETNTPEHVSQTETS. Ser-777 bears the Phosphoserine mark. Residues 974-1239 form the Protein kinase domain; it reads LEELKELGSG…PEIARRLRTM (266 aa). Residues 980–988 and Lys-1001 contribute to the ATP site; that span reads LGSGTFGTV. Ser-1013 bears the Phosphoserine mark. The Proton acceptor role is filled by Asp-1102.

This sequence belongs to the protein kinase superfamily. Ser/Thr protein kinase family. In terms of processing, hyperphosphorylated in response to auxin in an ABP1- and TMK1-dependent manner.

It is found in the cytoplasm. The enzyme catalyses L-seryl-[protein] + ATP = O-phospho-L-seryl-[protein] + ADP + H(+). It catalyses the reaction L-threonyl-[protein] + ATP = O-phospho-L-threonyl-[protein] + ADP + H(+). Its activity is regulated as follows. Activated by auxin via rapid phosphorylation downstream of ABP1 and TMK1 signaling. Its function is as follows. RAF-like protein kinase acting, together with RAF20, as a central mediator of a fast response pathway to auxin involving proteins phosphorylation, and leading to rapid cellular responses including membrane depolarization and cytoplasmic streaming. Required for general growth and developmental process. The polypeptide is RAF-like serine/threonine-protein kinase 24 (Arabidopsis thaliana (Mouse-ear cress)).